A 72-amino-acid chain; its full sequence is Conotoxin Gla(2)-TxVI/B (72 aa).

The N-terminal stretch at 1–19 (MEKLIILLLVAAVLMSTQA) is a signal peptide. Residues 20–44 (LFQEKRTMKKIDFLSKGKADAEKQR) constitute a propeptide that is removed on maturation. Cystine bridges form between Cys48-Cys62, Cys55-Cys66, and Cys61-Cys70. Glu56 bears the 4-carboxyglutamate mark. Pro58 is modified (4-hydroxyproline). Ser71 carries the serine amide modification.

Brominated at one of the Trp residues. Expressed by the venom duct.

It is found in the secreted. This Conus textile (Cloth-of-gold cone) protein is Conotoxin Gla(2)-TxVI/B.